The primary structure comprises 65 residues: Large ribosomal subunit protein bL35 (65 aa).

Residues 1 to 43 (MPKMKTRRGAAKRFAKTGSGKFKRRKQGLRHILTKKTAKRKSR) show a composition bias toward basic residues. The tract at residues 1–49 (MPKMKTRRGAAKRFAKTGSGKFKRRKQGLRHILTKKTAKRKSRLGQSAT) is disordered.

Belongs to the bacterial ribosomal protein bL35 family.

This is Large ribosomal subunit protein bL35 from Maridesulfovibrio salexigens (strain ATCC 14822 / DSM 2638 / NCIMB 8403 / VKM B-1763) (Desulfovibrio salexigens).